The sequence spans 269 residues: 4-hydroxy-tetrahydrodipicolinate reductase (269 aa).

Residues 8-13 (GAAGRM) and Glu-34 contribute to the NAD(+) site. An NADP(+)-binding site is contributed by Arg-35. NAD(+) contacts are provided by residues 98-100 (GTT) and 122-125 (APNY). His-155 acts as the Proton donor/acceptor in catalysis. His-156 is a binding site for (S)-2,3,4,5-tetrahydrodipicolinate. Lys-159 (proton donor) is an active-site residue. 165 to 166 (GT) serves as a coordination point for (S)-2,3,4,5-tetrahydrodipicolinate.

The protein belongs to the DapB family.

It is found in the cytoplasm. The enzyme catalyses (S)-2,3,4,5-tetrahydrodipicolinate + NAD(+) + H2O = (2S,4S)-4-hydroxy-2,3,4,5-tetrahydrodipicolinate + NADH + H(+). It catalyses the reaction (S)-2,3,4,5-tetrahydrodipicolinate + NADP(+) + H2O = (2S,4S)-4-hydroxy-2,3,4,5-tetrahydrodipicolinate + NADPH + H(+). It functions in the pathway amino-acid biosynthesis; L-lysine biosynthesis via DAP pathway; (S)-tetrahydrodipicolinate from L-aspartate: step 4/4. Functionally, catalyzes the conversion of 4-hydroxy-tetrahydrodipicolinate (HTPA) to tetrahydrodipicolinate. The sequence is that of 4-hydroxy-tetrahydrodipicolinate reductase from Vibrio parahaemolyticus serotype O3:K6 (strain RIMD 2210633).